Consider the following 116-residue polypeptide: MTNKIILALEAEQMTKEIPTFAPGDTIVVQVKVKEGDRARLQAFEGVVIAKRNRGVNSAFTVRKISNGVGVERTFQTYSPQIDSMAVKRRGDVRKAKLYYLRDLSGKAARIKEKLS.

Belongs to the bacterial ribosomal protein bL19 family.

This protein is located at the 30S-50S ribosomal subunit interface and may play a role in the structure and function of the aminoacyl-tRNA binding site. The chain is Large ribosomal subunit protein bL19 from Pseudomonas savastanoi pv. phaseolicola (strain 1448A / Race 6) (Pseudomonas syringae pv. phaseolicola (strain 1448A / Race 6)).